A 319-amino-acid polypeptide reads, in one-letter code: GTPase Era (319 aa).

An Era-type G domain is found at 9-196 (RSGVSLIIGR…MRTLRDLLPE (188 aa)). Positions 17 to 24 (GRPSSGKS) are G1. Residue 17–24 (GRPSSGKS) coordinates GTP. Positions 43 to 47 (QTTRN) are G2. Residues 64 to 67 (DTPG) are G3. Residues 64–68 (DTPGY) and 127–130 (NKVD) each bind GTP. The interval 127 to 130 (NKVD) is G4. Residues 175-177 (ISA) are G5. Residues 227–303 (CRDELPHALY…HISLDIRVKV (77 aa)) enclose the KH type-2 domain.

The protein belongs to the TRAFAC class TrmE-Era-EngA-EngB-Septin-like GTPase superfamily. Era GTPase family. As to quaternary structure, monomer.

It is found in the cytoplasm. The protein localises to the cell inner membrane. An essential GTPase that binds both GDP and GTP, with rapid nucleotide exchange. Plays a role in 16S rRNA processing and 30S ribosomal subunit biogenesis and possibly also in cell cycle regulation and energy metabolism. This Treponema pallidum (strain Nichols) protein is GTPase Era.